We begin with the raw amino-acid sequence, 636 residues long: Plasma kallikrein (636 aa).

A signal peptide spans 1 to 19 (MIALRQAAYFICLFATVSC). 4 Apple domains span residues 21-104 (CLTQ…LKRC), 111-194 (CHRS…LKAC), 201-284 (CRVD…LLTC), and 294-377 (CHSK…LRLC). Disulfide bonds link Cys21-Cys104, Cys47-Cys77, Cys51-Cys57, Cys111-Cys194, Cys137-Cys166, Cys141-Cys147, Cys201-Cys284, Cys227-Cys256, Cys231-Cys237, Cys294-Cys377, Cys320-Cys349, and Cys324-Cys330. Asn66 and Asn127 each carry an N-linked (GlcNAc...) asparagine glycan. N-linked (GlcNAc...) asparagine glycosylation is found at Asn361 and Asn397. Residues 392-627 (IVGGTNASWG…YVDWILEKTQ (236 aa)) form the Peptidase S1 domain. A disulfide bridge connects residues Cys420 and Cys436. Catalysis depends on His435, which acts as the Charge relay system. An N-linked (GlcNAc...) asparagine glycan is attached at Asn454. Residue Asp484 is the Charge relay system of the active site. N-linked (GlcNAc...) asparagine glycosylation occurs at Asn495. 3 disulfides stabilise this stretch: Cys518-Cys585, Cys549-Cys564, and Cys575-Cys603. Ser579 serves as the catalytic Charge relay system.

The protein belongs to the peptidase S1 family. Plasma kallikrein subfamily. In terms of assembly, forms a heterodimer with SERPINA5. The zymogen is activated by factor XIIa, which cleaves the molecule into a light chain, which contains the active site, and a heavy chain, which associates with HMW kininogen. These chains are linked by one or more disulfide bonds.

It is found in the secreted. It catalyses the reaction Cleaves selectively Arg-|-Xaa and Lys-|-Xaa bonds, including Lys-|-Arg and Arg-|-Ser bonds in (human) kininogen to release bradykinin.. Its activity is regulated as follows. Inhibited by SERPINA5. In terms of biological role, the enzyme cleaves Lys-Arg and Arg-Ser bonds. It activates, in a reciprocal reaction, factor XII after its binding to a negatively charged surface. It also releases bradykinin from HMW kininogen and may also play a role in the renin-angiotensin system by converting prorenin into renin. This Bos taurus (Bovine) protein is Plasma kallikrein (KLKB1).